We begin with the raw amino-acid sequence, 231 residues long: Small ribosomal subunit protein uS3 (231 aa).

Residues valine 39–arginine 107 enclose the KH type-2 domain.

This sequence belongs to the universal ribosomal protein uS3 family. Part of the 30S ribosomal subunit. Forms a tight complex with proteins S10 and S14.

Binds the lower part of the 30S subunit head. Binds mRNA in the 70S ribosome, positioning it for translation. The protein is Small ribosomal subunit protein uS3 of Colwellia psychrerythraea (strain 34H / ATCC BAA-681) (Vibrio psychroerythus).